The chain runs to 318 residues: MLNPLNIEYLYLSKLFDNSLIVFNKRQLFRFFVRFFFMTAALPNDSKPKLTPAWTVIFFFTSIHLVALLAFLPQFFSWKAVGMAFLLYVITGGIGITLGFHRCISHRSFNVPKWLEYIFVICGTLACQGGVFEWVGLHRMHHKFSDTTPDPHDSNKGFWWSHIGWMMFEIPAKADIPRYTKDIQDDKFYQFCQNNLILIQVALGLILFALGGWPFVIWGIFVRLVFVFHFTWFVNSATHKFGYVSHESNDYSRNCWWVALLTFGEGWHNNHHAYQYSARHGLQWWEVDLTWMTIKFLSLLGLAKDIKLPPETAMANKA.

Helical transmembrane passes span 56-76 and 80-100; these read VIFF…PQFF and AVGM…TLGF. A Histidine box-1 motif is present at residues 101–106; sequence HRCISH. A helical membrane pass occupies residues 117-137; it reads YIFVICGTLACQGGVFEWVGL. Positions 138-142 match the Histidine box-2 motif; it reads HRMHH. The chain crosses the membrane as a helical span at residues 201 to 221; sequence VALGLILFALGGWPFVIWGIF. The short motif at 271 to 275 is the Histidine box-3 element; that stretch reads HHAYQ.

It belongs to the fatty acid desaturase type 2 family. Requires Fe(2+) as cofactor.

It localises to the cellular thylakoid membrane. It carries out the reaction a 1-octadecanoyl 2-acyl-glycerolipid + 2 reduced [2Fe-2S]-[ferredoxin] + O2 + 2 H(+) = a 1-[(9Z)-octadecenoyl]-2-acyl-glycerolipid + 2 oxidized [2Fe-2S]-[ferredoxin] + 2 H2O. It participates in lipid metabolism; polyunsaturated fatty acid biosynthesis. Its function is as follows. Desaturase involved in fatty acid biosynthesis. Introduces a double bond at carbon 9 of stearoyl groups (18:0) attached to the sn-1 position of the glycerol moiety of membrane glycerolipids. Does not desaturate palmitic acid (16:0), palmitoleic acid (16:1) and cis-vaccenic acid (18:1). This is sn-1 stearoyl-lipid 9-desaturase from Synechocystis sp. (strain ATCC 27184 / PCC 6803 / Kazusa).